The primary structure comprises 823 residues: Degenerin-like protein asic-1 (823 aa).

Over 1–38 (MGKNSLKRALELDVVDFAEHTSAHGIPRAYVSTGWRRY) the chain is Cytoplasmic. Residues 39–59 (MWLLCFLFCLSCFGHQAYLIV) form a helical membrane-spanning segment. At 60–767 (ERFNRNDIIV…FGGQLGLWMG (708 aa)) the chain is on the extracellular side. 2 cysteine pairs are disulfide-bonded: Cys86–Cys518 and Cys494–Cys501. 5 N-linked (GlcNAc...) asparagine glycosylation sites follow: Asn228, Asn326, Asn347, Asn415, and Asn486. Asn527 and Asn546 each carry an N-linked (GlcNAc...) asparagine glycan. 4 disulfides stabilise this stretch: Cys604–Cys687, Cys625–Cys683, Cys629–Cys681, and Cys638–Cys664. The short motif at 767-769 (GVS) is the GAS motif; ion selectivity filter element. The chain crosses the membrane as a helical span at residues 768–788 (VSVITIGEVACFFFEVFISLI). Residues 789-795 (SSNRTKR) are Cytoplasmic-facing.

Belongs to the amiloride-sensitive sodium channel (TC 1.A.6) family. Homotrimer. Heterotrimer; with other ASIC proteins producing channel with different properties.

It localises to the cell membrane. The protein localises to the postsynaptic cell membrane. The protein resides in the cell projection. It is found in the dendrite. It carries out the reaction Na(+)(in) = Na(+)(out). The catalysed reaction is K(+)(in) = K(+)(out). It catalyses the reaction Li(+)(in) = Li(+)(out). The enzyme catalyses Ca(2+)(in) = Ca(2+)(out). Functionally, forms voltage-independent, pH-gated trimeric sodium channels that act as postsynaptic excitatory receptors in the nervous system, playing a crucial role in regulating synaptic plasticity, learning, and memory. Promotes synaptic vesicle fusion to positively regulate the release of dopamine at dopaminergic neuron synapses. Displays high selectivity for sodium ions but can also permit the permeation of other cations. The sequence is that of Degenerin-like protein asic-1 from Caenorhabditis elegans.